A 182-amino-acid chain; its full sequence is MGKGRFDEKENVSNCIQLKTSVIKGIKNQLLEQFPGIEPWLNQIMPKKDPVKIVRCHEHIEILTVNGELLFFRQREGPFYPTLRLLHKYPFILPHQQVDKGAIKFVLSGANIMCPGLTSPGAKLYPAAVDTIVAIMAEGKQHALCVGVMKMSAEDIEKVNKGIGIENIHYLNDGLWHMKTYK.

A Phosphothreonine modification is found at Thr-82. Residues 93-172 (LPHQQVDKGA…IGIENIHYLN (80 aa)) form the PUA domain. A Phosphoserine modification is found at Ser-119.

Belongs to the MCTS1 family. In terms of assembly, interacts (via PUA domain) with DENR; the complex regulates translation reinitiation. Phosphorylation is critical for stabilization and promotion of cell proliferation.

Its subcellular location is the cytoplasm. Its function is as follows. Translation regulator forming a complex with DENR to promote translation reinitiation. Translation reinitiation is the process where the small ribosomal subunit remains attached to the mRNA following termination of translation of a regulatory upstream ORF (uORF), and resume scanning on the same mRNA molecule to initiate translation of a downstream ORF, usually the main ORF (mORF). The MCTS1/DENR complex is pivotal to two linked mechanisms essential for translation reinitiation. Firstly, the dissociation of deacylated tRNAs from post-termination 40S ribosomal complexes during ribosome recycling. Secondly, the recruitment in an EIF2-independent manner of aminoacylated initiator tRNA to P site of 40S ribosomes for a new round of translation. This regulatory mechanism governs the translation of more than 150 genes which translation reinitiation is MCTS1/DENR complex-dependent. Consequently, modulates various unrelated biological processes including cell cycle regulation and DNA damage signaling and repair. Notably, it positively regulates interferon gamma immunity to mycobacteria by enhancing the translation of JAK2. The chain is Malignant T-cell-amplified sequence 1 (Mcts1) from Rattus norvegicus (Rat).